The chain runs to 721 residues: Dipeptidyl-peptidase 5 (721 aa).

An N-terminal signal peptide occupies residues 1-18 (MGAFRWLSIAAAASTALA). N-linked (GlcNAc...) asparagine glycosylation is found at Asn-75, Asn-94, Asn-151, and Asn-254. Positions 271 to 297 (ARPINGPDSPGTPKGIKGDSSSPVFSP) are disordered. Asn-380 and Asn-450 each carry an N-linked (GlcNAc...) asparagine glycan. Residue Ser-560 is the Charge relay system of the active site. An N-linked (GlcNAc...) asparagine glycan is attached at Asn-607. Catalysis depends on charge relay system residues Asp-643 and His-675.

It belongs to the peptidase S9C family. Post-translationally, N-glycosylated. As to expression, expressed in mycelia and conidia.

The protein localises to the secreted. In terms of biological role, may be involved in metabolism of dipeptides or may affect host defense mechanisms. Has a substrate specificity limited to the hydrolysis of X-Ala, His-Ser, and Ser-Tyr dipeptides at a neutral pH optimum. The sequence is that of Dipeptidyl-peptidase 5 from Aspergillus fumigatus (strain CBS 144.89 / FGSC A1163 / CEA10) (Neosartorya fumigata).